The following is a 293-amino-acid chain: Signal recognition particle receptor FtsY (293 aa).

Residues 93–100, 175–179, and 239–242 each bind GTP; these read GVNGAGKT, DTAGR, and TKLD.

The protein belongs to the GTP-binding SRP family. FtsY subfamily. Part of the signal recognition particle protein translocation system, which is composed of SRP and FtsY. SRP is a ribonucleoprotein composed of Ffh and a 4.5S RNA molecule.

Its subcellular location is the cell inner membrane. The protein localises to the cytoplasm. The enzyme catalyses GTP + H2O = GDP + phosphate + H(+). Involved in targeting and insertion of nascent membrane proteins into the cytoplasmic membrane. Acts as a receptor for the complex formed by the signal recognition particle (SRP) and the ribosome-nascent chain (RNC). Interaction with SRP-RNC leads to the transfer of the RNC complex to the Sec translocase for insertion into the membrane, the hydrolysis of GTP by both Ffh and FtsY, and the dissociation of the SRP-FtsY complex into the individual components. The protein is Signal recognition particle receptor FtsY of Helicobacter pylori (strain J99 / ATCC 700824) (Campylobacter pylori J99).